Here is a 205-residue protein sequence, read N- to C-terminus: Urease accessory protein UreG (205 aa).

11–18 (GPVGSGKT) serves as a coordination point for GTP.

The protein belongs to the SIMIBI class G3E GTPase family. UreG subfamily. Homodimer. UreD, UreF and UreG form a complex that acts as a GTP-hydrolysis-dependent molecular chaperone, activating the urease apoprotein by helping to assemble the nickel containing metallocenter of UreC. The UreE protein probably delivers the nickel.

It localises to the cytoplasm. Facilitates the functional incorporation of the urease nickel metallocenter. This process requires GTP hydrolysis, probably effectuated by UreG. This is Urease accessory protein UreG from Prochlorococcus marinus (strain NATL2A).